Here is a 112-residue protein sequence, read N- to C-terminus: FK506-binding protein 1A (112 aa).

The region spanning 20–108 (GDFVTIHYTG…IFEVELLGIN (89 aa)) is the PPIase FKBP-type domain.

It belongs to the FKBP-type PPIase family. FKBP1 subfamily.

The protein resides in the cytoplasm. It catalyses the reaction [protein]-peptidylproline (omega=180) = [protein]-peptidylproline (omega=0). Its activity is regulated as follows. Inhibited by both FK506 and rapamycin. In terms of biological role, PPIases accelerate the folding of proteins. It catalyzes the cis-trans isomerization of proline imidic peptide bonds in oligopeptides. This chain is FK506-binding protein 1A (fpr1A), found in Aspergillus fumigatus (strain ATCC MYA-4609 / CBS 101355 / FGSC A1100 / Af293) (Neosartorya fumigata).